We begin with the raw amino-acid sequence, 146 residues long: Large ribosomal subunit protein uL11 (146 aa).

It belongs to the universal ribosomal protein uL11 family. Part of the ribosomal stalk of the 50S ribosomal subunit. Interacts with L10 and the large rRNA to form the base of the stalk. L10 forms an elongated spine to which L12 dimers bind in a sequential fashion forming a multimeric L10(L12)X complex. One or more lysine residues are methylated.

In terms of biological role, forms part of the ribosomal stalk which helps the ribosome interact with GTP-bound translation factors. In Buchnera aphidicola subsp. Baizongia pistaciae (strain Bp), this protein is Large ribosomal subunit protein uL11.